The sequence spans 319 residues: Acetyl-coenzyme A carboxylase carboxyl transferase subunit alpha (319 aa).

One can recognise a CoA carboxyltransferase C-terminal domain in the interval 32-293 (NVETEVRALR…KAVLLNELDA (262 aa)).

The protein belongs to the AccA family. As to quaternary structure, acetyl-CoA carboxylase is a heterohexamer composed of biotin carboxyl carrier protein (AccB), biotin carboxylase (AccC) and two subunits each of ACCase subunit alpha (AccA) and ACCase subunit beta (AccD).

The protein localises to the cytoplasm. It catalyses the reaction N(6)-carboxybiotinyl-L-lysyl-[protein] + acetyl-CoA = N(6)-biotinyl-L-lysyl-[protein] + malonyl-CoA. The protein operates within lipid metabolism; malonyl-CoA biosynthesis; malonyl-CoA from acetyl-CoA: step 1/1. Functionally, component of the acetyl coenzyme A carboxylase (ACC) complex. First, biotin carboxylase catalyzes the carboxylation of biotin on its carrier protein (BCCP) and then the CO(2) group is transferred by the carboxyltransferase to acetyl-CoA to form malonyl-CoA. In Xanthomonas oryzae pv. oryzae (strain MAFF 311018), this protein is Acetyl-coenzyme A carboxylase carboxyl transferase subunit alpha.